The primary structure comprises 92 residues: UPF0250 protein Rmag_0541 (92 aa).

The protein belongs to the UPF0250 family.

The polypeptide is UPF0250 protein Rmag_0541 (Ruthia magnifica subsp. Calyptogena magnifica).